Reading from the N-terminus, the 878-residue chain is Valine--tRNA ligase (878 aa).

The 'HIGH' region motif lies at 45–55 (PNVTGQLHMGH). The 'KMSKS' region motif lies at 524–528 (KMSKS). K527 serves as a coordination point for ATP. A coiled-coil region spans residues 804–871 (PLKDLIDLEK…REKEVLEQRI (68 aa)).

This sequence belongs to the class-I aminoacyl-tRNA synthetase family. ValS type 1 subfamily. As to quaternary structure, monomer.

The protein localises to the cytoplasm. The enzyme catalyses tRNA(Val) + L-valine + ATP = L-valyl-tRNA(Val) + AMP + diphosphate. Functionally, catalyzes the attachment of valine to tRNA(Val). As ValRS can inadvertently accommodate and process structurally similar amino acids such as threonine, to avoid such errors, it has a 'posttransfer' editing activity that hydrolyzes mischarged Thr-tRNA(Val) in a tRNA-dependent manner. This is Valine--tRNA ligase from Carboxydothermus hydrogenoformans (strain ATCC BAA-161 / DSM 6008 / Z-2901).